The chain runs to 169 residues: Translationally-controlled tumor protein homolog (169 aa).

Positions 1–169 (MIIYKDIVSG…FKDGLEEEKF (169 aa)) constitute a TCTP domain.

The protein belongs to the TCTP family.

It is found in the cytoplasm. In terms of biological role, involved in calcium binding and microtubule stabilization. This is Translationally-controlled tumor protein homolog from Branchiostoma belcheri (Amphioxus).